Consider the following 320-residue polypeptide: Mitochondrial glutamate carrier 2 (320 aa).

Solcar repeat units lie at residues 11-97 (LSIT…LRQL), 105-215 (RNLK…LNQL), and 224-313 (ASFT…GIGE). The next 3 helical transmembrane spans lie at 17–37 (LING…IDLA), 66–86 (FLGM…EKAI), and 111–131 (MLAG…MEML). The residue at position 150 (serine 150) is a Phosphoserine. The next 3 helical transmembrane spans lie at 190 to 210 (GLGA…PLFA), 230 to 250 (FVAG…LDVL), and 293 to 313 (ALVI…GIGE).

It belongs to the mitochondrial carrier (TC 2.A.29) family.

Its subcellular location is the mitochondrion inner membrane. The enzyme catalyses L-glutamate(in) + H(+)(in) = L-glutamate(out) + H(+)(out). Functionally, responsible for the transport of glutamate from the cytosol into the mitochondrial matrix with the concomitant import of a proton (symport system). This Rattus norvegicus (Rat) protein is Mitochondrial glutamate carrier 2 (Slc25a18).